A 390-amino-acid polypeptide reads, in one-letter code: Argininosuccinate synthase (390 aa).

6 to 14 (SYSGGLDTT) provides a ligand contact to ATP. An L-citrulline-binding site is contributed by Tyr-83. An ATP-binding site is contributed by Gly-113. L-aspartate is bound by residues Thr-115, Asn-119, and Asp-120. Position 119 (Asn-119) interacts with L-citrulline. Arg-123, Ser-169, Ser-178, Glu-254, and Tyr-266 together coordinate L-citrulline.

The protein belongs to the argininosuccinate synthase family. Type 1 subfamily. In terms of assembly, homotetramer.

The protein resides in the cytoplasm. It catalyses the reaction L-citrulline + L-aspartate + ATP = 2-(N(omega)-L-arginino)succinate + AMP + diphosphate + H(+). It participates in amino-acid biosynthesis; L-arginine biosynthesis; L-arginine from L-ornithine and carbamoyl phosphate: step 2/3. In Archaeoglobus fulgidus (strain ATCC 49558 / DSM 4304 / JCM 9628 / NBRC 100126 / VC-16), this protein is Argininosuccinate synthase.